The following is a 394-amino-acid chain: Probable dual specificity protein phosphatase DDB_G0281963 (394 aa).

The Tyrosine-protein phosphatase domain maps to 2–142 (NDVSRIFPGF…LKKYELILKK (141 aa)). Cys86 acts as the Phosphocysteine intermediate in catalysis. The disordered stretch occupies residues 147 to 191 (PQIVEKESEEEDDDEDDDDDDYDSDEDDDDDSEDDDFEEEFDNVV). Positions 153–188 (ESEEEDDDEDDDDDDYDSDEDDDDDSEDDDFEEEFD) are enriched in acidic residues.

It belongs to the protein-tyrosine phosphatase family. Non-receptor class dual specificity subfamily.

The enzyme catalyses O-phospho-L-tyrosyl-[protein] + H2O = L-tyrosyl-[protein] + phosphate. The catalysed reaction is O-phospho-L-seryl-[protein] + H2O = L-seryl-[protein] + phosphate. It carries out the reaction O-phospho-L-threonyl-[protein] + H2O = L-threonyl-[protein] + phosphate. Its function is as follows. Has a dual specificity toward Ser/Thr and Tyr-containing proteins. The sequence is that of Probable dual specificity protein phosphatase DDB_G0281963 from Dictyostelium discoideum (Social amoeba).